Consider the following 340-residue polypeptide: Phosphoribosylformylglycinamidine cyclo-ligase (340 aa).

This sequence belongs to the AIR synthase family.

It is found in the cytoplasm. The enzyme catalyses 2-formamido-N(1)-(5-O-phospho-beta-D-ribosyl)acetamidine + ATP = 5-amino-1-(5-phospho-beta-D-ribosyl)imidazole + ADP + phosphate + H(+). Its pathway is purine metabolism; IMP biosynthesis via de novo pathway; 5-amino-1-(5-phospho-D-ribosyl)imidazole from N(2)-formyl-N(1)-(5-phospho-D-ribosyl)glycinamide: step 2/2. This is Phosphoribosylformylglycinamidine cyclo-ligase from Streptococcus pneumoniae (strain 70585).